Here is a 108-residue protein sequence, read N- to C-terminus: uncharacterized protein (108 aa).

Belongs to the baculoviridae 11 kDa protein family.

This is an uncharacterized protein from Orgyia pseudotsugata (Douglas-fir tussock moth).